A 186-amino-acid chain; its full sequence is Peptidyl-tRNA hydrolase (186 aa).

Y14 serves as a coordination point for tRNA. Catalysis depends on H19, which acts as the Proton acceptor. 3 residues coordinate tRNA: Y61, N63, and N107.

It belongs to the PTH family. Monomer.

Its subcellular location is the cytoplasm. It carries out the reaction an N-acyl-L-alpha-aminoacyl-tRNA + H2O = an N-acyl-L-amino acid + a tRNA + H(+). Functionally, hydrolyzes ribosome-free peptidyl-tRNAs (with 1 or more amino acids incorporated), which drop off the ribosome during protein synthesis, or as a result of ribosome stalling. In terms of biological role, catalyzes the release of premature peptidyl moieties from peptidyl-tRNA molecules trapped in stalled 50S ribosomal subunits, and thus maintains levels of free tRNAs and 50S ribosomes. This chain is Peptidyl-tRNA hydrolase, found in Helicobacter pylori (strain Shi470).